The following is a 124-amino-acid chain: Small ribosomal subunit protein uS13 (124 aa).

Positions Gly95–Arg124 are disordered.

This sequence belongs to the universal ribosomal protein uS13 family. Part of the 30S ribosomal subunit. Forms a loose heterodimer with protein S19. Forms two bridges to the 50S subunit in the 70S ribosome.

In terms of biological role, located at the top of the head of the 30S subunit, it contacts several helices of the 16S rRNA. In the 70S ribosome it contacts the 23S rRNA (bridge B1a) and protein L5 of the 50S subunit (bridge B1b), connecting the 2 subunits; these bridges are implicated in subunit movement. Contacts the tRNAs in the A and P-sites. In Leifsonia xyli subsp. xyli (strain CTCB07), this protein is Small ribosomal subunit protein uS13.